Consider the following 192-residue polypeptide: Casparian strip membrane protein 2 (192 aa).

Residues methionine 1–serine 31 lie on the Cytoplasmic side of the membrane. Residues valine 32–methionine 52 form a helical membrane-spanning segment. Residues glycine 53–threonine 79 are Extracellular-facing. Asparagine 56 carries N-linked (GlcNAc...) asparagine glycosylation. Residues phenylalanine 80–isoleucine 100 traverse the membrane as a helical segment. The Cytoplasmic portion of the chain corresponds to valine 101–arginine 112. A helical transmembrane segment spans residues leucine 113–alanine 133. At alanine 134–serine 166 the chain is on the extracellular side. A helical transmembrane segment spans residues leucine 167–alanine 187. Topologically, residues leucine 188–histidine 192 are cytoplasmic.

The protein belongs to the Casparian strip membrane proteins (CASP) family. As to quaternary structure, homodimer and heterodimers.

The protein localises to the cell membrane. Its function is as follows. Regulates membrane-cell wall junctions and localized cell wall deposition. Required for establishment of the Casparian strip membrane domain (CSD) and the subsequent formation of Casparian strips, a cell wall modification of the root endodermis that determines an apoplastic barrier between the intraorganismal apoplasm and the extraorganismal apoplasm and prevents lateral diffusion. This Panicum virgatum (Blackwell switchgrass) protein is Casparian strip membrane protein 2.